Consider the following 88-residue polypeptide: Homeobox protein knotted-1-like 3 (88 aa).

The 21-residue stretch at 4–24 folds into the ELK domain; the sequence is ELKKQLLRKYSGCLGNLRKEL. Positions 25–88 form a DNA-binding region, homeobox; TALE-type; the sequence is CKKRKKDKLP…NQRKRHWKPS (64 aa).

This sequence belongs to the TALE/KNOX homeobox family. As to expression, strongly expressed in ear inflorescence primordia and shoot meristem. Weakly expressed in embryos. Absent from leaves.

The protein resides in the nucleus. Probably binds to the DNA sequence 5'-TGAC-3'. The polypeptide is Homeobox protein knotted-1-like 3 (KNOX3) (Zea mays (Maize)).